The primary structure comprises 402 residues: Putative RNA-guided DNA endonuclease InsQ (402 aa).

Catalysis depends on residues D183 and E267. Positions 334, 337, 353, and 356 each coordinate Zn(2+). The active site involves D363.

The protein in the N-terminal section; belongs to the transposase 2 family. It in the C-terminal section; belongs to the transposase 35 family.

An RNA-guided dsDNA endonuclease. When guided by an RNA derived from the right-end element of its insertion sequence element (IS), cleaves DNA downstream of the transposon-associated motif (TAM). Cleaves supercoiled and linear DNA in a staggered manner 15-21 bases from the TAM yielding 5'-overhangs. Binds reRNA, an approximately 150 nucleotide base sRNA derived from the 3' end of its own gene, the right end (RE) of the insertion sequence (IS) plus sequence downstream of the IS. In terms of biological role, not required for transposition of the insertion element. The corresponding transposase in strains MG1655 and W3110 is a truncated pseudogene (yncK). This chain is Putative RNA-guided DNA endonuclease InsQ (insQ), found in Escherichia coli (strain K12).